A 114-amino-acid chain; its full sequence is TYRO protein tyrosine kinase-binding protein (114 aa).

An N-terminal signal peptide occupies residues 1-27 (MGAPEPSWCFLFLPVLLTVGGLSPVQA). Over 28-42 (QSDNYPGCECSSVSP) the chain is Extracellular. Residues 43–63 (GVLAGIVLGDLVLTLLIALAV) traverse the membrane as a helical segment. D52 is a binding site for Ca(2+). The Cytoplasmic segment spans residues 64-114 (YSLGRLVSRGRGTADGTRKQHMAETESPYQELQGQRPEVYSDLNTQRQYYR). The segment at 72-114 (RGRGTADGTRKQHMAETESPYQELQGQRPEVYSDLNTQRQYYR) is disordered. An ITAM domain is found at 81–109 (RKQHMAETESPYQELQGQRPEVYSDLNTQ). Residues Y92 and Y103 each carry the phosphotyrosine modification. Residues 105–114 (DLNTQRQYYR) are compositionally biased toward polar residues.

Belongs to the TYROBP family. In terms of assembly, homodimer; disulfide-linked. Homotrimer; disulfide-linked. Homotetramer; disulfide-linked. Homotrimers and homotetramers form when low levels of partner receptors are available and is competitive with assembly with interacting receptors. They may represent alternative oligomerization states or may be intermediates in the receptor assembly process. Binding of a metal cation aids in homooligomerization through coordination of the metal ion by the subunits of the oligomer. Interacts with TREM1. Interacts with TREM2. Interacts with CLECSF5. Interacts with CD300LB and CD300C2. Interacts with CD300E. Interacts (via ITAM domain) with SYK (via SH2 domains); activates SYK mediating neutrophils and macrophages integrin-mediated activation. Interacts with KLRC2. Interacts with CD300H. Interacts with KLRD1. Interacts with SIGLEC1. Following ligand binding by associated receptors, tyrosine phosphorylated in the ITAM domain which leads to activation of additional tyrosine kinases and subsequent cell activation.

The protein resides in the cell membrane. In terms of biological role, adapter protein which non-covalently associates with activating receptors found on the surface of a variety of immune cells to mediate signaling and cell activation following ligand binding by the receptors. TYROBP is tyrosine-phosphorylated in the ITAM domain following ligand binding by the associated receptors which leads to activation of additional tyrosine kinases and subsequent cell activation. Also has an inhibitory role in some cells. Non-covalently associates with activating receptors of the CD300 family to mediate cell activation. Also mediates cell activation through association with activating receptors of the CD200R family. Required for neutrophil activation mediated by integrin. Required for the activation of myeloid cells mediated by the CLEC5A/MDL1 receptor. Associates with natural killer (NK) cell receptors such as the KLRD1/KLRC2 heterodimer to mediate NK cell activation. Associates with TREM1 to mediate activation of neutrophils and monocytes. Associates with TREM2 on monocyte-derived dendritic cells to mediate up-regulation of chemokine receptor CCR7 and dendritic cell maturation and survival. PAssociation with TREM2 mediates cytokine-induced formation of multinucleated giant cells which are formed by the fusion of macrophages. Stabilizes the TREM2 C-terminal fragment (TREM2-CTF) produced by TREM2 ectodomain shedding which suppresses the release of pro-inflammatory cytokines. In microglia, required with TREM2 for phagocytosis of apoptotic neurons. Required with ITGAM/CD11B in microglia to control production of microglial superoxide ions which promote the neuronal apoptosis that occurs during brain development. Promotes pro-inflammatory responses in microglia following nerve injury which accelerates degeneration of injured neurons. ositively regulates the expression of the IRAK3/IRAK-M kinase and IL10 production by liver dendritic cells and inhibits their T cell allosimulatory ability. Negatively regulates B cell proliferation. Required for CSF1-mediated osteoclast cytoskeletal organization. Positively regulates multinucleation during osteoclast development. The polypeptide is TYRO protein tyrosine kinase-binding protein (Rattus norvegicus (Rat)).